We begin with the raw amino-acid sequence, 341 residues long: Basic membrane protein D (341 aa).

The first 16 residues, methionine 1–alanine 16, serve as a signal peptide directing secretion. Cysteine 17 is lipidated: N-palmitoyl cysteine. Residue cysteine 17 is the site of S-diacylglycerol cysteine attachment.

The protein belongs to the BMP lipoprotein family. Monomer.

It localises to the cell inner membrane. Functionally, binds adenosine and inosine. May be part of an ABC-type nucleoside uptake system involved in the purine salvage pathway. The polypeptide is Basic membrane protein D (Borreliella burgdorferi (strain JD1) (Borrelia burgdorferi)).